Reading from the N-terminus, the 404-residue chain is Mitochondrial potassium channel (404 aa).

The transit peptide at Met1–Thr30 directs the protein to the mitochondrion. Residues Leu31–Lys196 lie on the Mitochondrial matrix side of the membrane. Ser65 is subject to Phosphoserine. Residues Val111–Asp138 are a coiled coil. Residues Asn197 to Val217 form a helical membrane-spanning segment. The Mitochondrial intermembrane segment spans residues Asn218–Val380. Residues Tyr381–Phe401 traverse the membrane as a helical segment. Residues Arg402–Ser404 are Mitochondrial matrix-facing.

In terms of assembly, the mitochondrial potassium channel (mitoK(ATP)) forms a heteromultimer.

The protein localises to the mitochondrion inner membrane. It catalyses the reaction K(+)(in) = K(+)(out). With respect to regulation, channel activity inhibited by ATP via ABCB8/MITOSUR subunit. Pore-forming subunit of the mitochondrial ATP-gated potassium channel (mitoK(ATP)). Together with ATP-binding subunit ABCB8/MITOSUR of the mitoK(ATP) channel, mediates ATP-dependent K(+) currents across the mitochondrial inner membrane. An increase in ATP intracellular levels closes the channel, inhibiting K(+) transport, whereas a decrease in ATP levels enhances K(+) uptake in the mitochondrial matrix. May contribute to the homeostatic control of cellular metabolism under stress conditions by regulating the mitochondrial matrix volume. This is Mitochondrial potassium channel from Bos taurus (Bovine).